The following is a 317-amino-acid chain: 4-diphosphocytidyl-2-C-methyl-D-erythritol kinase (317 aa).

Lysine 17 is an active-site residue. An ATP-binding site is contributed by 109 to 119 (PVAGGMGGGSA). Aspartate 151 is a catalytic residue.

It belongs to the GHMP kinase family. IspE subfamily.

The catalysed reaction is 4-CDP-2-C-methyl-D-erythritol + ATP = 4-CDP-2-C-methyl-D-erythritol 2-phosphate + ADP + H(+). It functions in the pathway isoprenoid biosynthesis; isopentenyl diphosphate biosynthesis via DXP pathway; isopentenyl diphosphate from 1-deoxy-D-xylulose 5-phosphate: step 3/6. In terms of biological role, catalyzes the phosphorylation of the position 2 hydroxy group of 4-diphosphocytidyl-2C-methyl-D-erythritol. This chain is 4-diphosphocytidyl-2-C-methyl-D-erythritol kinase, found in Paenarthrobacter aurescens (strain TC1).